The chain runs to 528 residues: D-3-phosphoglycerate dehydrogenase (528 aa).

Residues 151–152, aspartate 171, 230–232, and aspartate 256 contribute to the NAD(+) site; these read RI and AAR. Arginine 232 is an active-site residue. Glutamate 261 is an active-site residue. The active-site Proton donor is the histidine 279. Position 279–282 (279–282) interacts with NAD(+); it reads HLGA. Residues 455 to 528 form the ACT domain; it reads NLVIRYVDQP…ANKLEVVNLS (74 aa).

Belongs to the D-isomer specific 2-hydroxyacid dehydrogenase family.

The enzyme catalyses (2R)-3-phosphoglycerate + NAD(+) = 3-phosphooxypyruvate + NADH + H(+). The catalysed reaction is (R)-2-hydroxyglutarate + NAD(+) = 2-oxoglutarate + NADH + H(+). It participates in amino-acid biosynthesis; L-serine biosynthesis; L-serine from 3-phospho-D-glycerate: step 1/3. Catalyzes the reversible oxidation of 3-phospho-D-glycerate to 3-phosphonooxypyruvate, the first step of the phosphorylated L-serine biosynthesis pathway. Also catalyzes the reversible oxidation of 2-hydroxyglutarate to 2-oxoglutarate. In Mycobacterium leprae (strain TN), this protein is D-3-phosphoglycerate dehydrogenase (serA).